An 876-amino-acid polypeptide reads, in one-letter code: Alanine--tRNA ligase (876 aa).

Zn(2+)-binding residues include histidine 563, histidine 567, cysteine 665, and histidine 669.

It belongs to the class-II aminoacyl-tRNA synthetase family. It depends on Zn(2+) as a cofactor.

It is found in the cytoplasm. The catalysed reaction is tRNA(Ala) + L-alanine + ATP = L-alanyl-tRNA(Ala) + AMP + diphosphate. In terms of biological role, catalyzes the attachment of alanine to tRNA(Ala) in a two-step reaction: alanine is first activated by ATP to form Ala-AMP and then transferred to the acceptor end of tRNA(Ala). Also edits incorrectly charged Ser-tRNA(Ala) and Gly-tRNA(Ala) via its editing domain. The polypeptide is Alanine--tRNA ligase (Shouchella clausii (strain KSM-K16) (Alkalihalobacillus clausii)).